The sequence spans 439 residues: MTHQLRSRDIIALGFMTFALFVGAGNIIFPPMVGLQAGEHVWTAAFGFLITAVGLPVLTVVALAKVGGGVDSLSTPIGKVAGVLLATVCYLAVGPLFATPRTATVSFEVGIAPLTGDSALPLFIYSLVYFAIVILVSLYPGKLLDTVGNFLAPLKIIALVILSVAAIVWPAGSISTATEAYQNAAFSNGFVNGYLTMDTLGAMVFGIVIVNAARSRGVTEARLLTRYTVWAGLMAGVGLTLLYLALFRLGSDSASLVDQSANGAAILHAYVQHTFGGGGSFLLAALIFIACLVTAVGLTCACAEFFAQYVPLSYRTLVFILGGFSMVVSNLGLSQLIQISVPVLTAIYPPCIALVVLSFTRSWWHNSSRVIAPPMFISLLFGILDGIKASAFSDILPSWAQRLPLAEQGLAWLMPTVVMVVLAIIWDRAAGRQVTSSAH.

The Cytoplasmic portion of the chain corresponds to Met-1–Asp-9. A helical transmembrane segment spans residues Ile-10–Pro-30. Over Pro-31–Ala-45 the chain is Periplasmic. Residues Phe-46–Val-66 form a helical membrane-spanning segment. At Gly-67 to Lys-79 the chain is on the cytoplasmic side. A helical membrane pass occupies residues Val-80 to Pro-100. The Periplasmic portion of the chain corresponds to Arg-101–Ser-118. Residues Ala-119–Tyr-139 traverse the membrane as a helical segment. Topologically, residues Pro-140–Asn-149 are cytoplasmic. The chain crosses the membrane as a helical span at residues Phe-150–Pro-170. The Periplasmic portion of the chain corresponds to Ala-171–Gly-189. A helical transmembrane segment spans residues Phe-190–Val-210. Topologically, residues Asn-211–Arg-226 are cytoplasmic. The helical transmembrane segment at Tyr-227–Phe-247 threads the bilayer. Topologically, residues Arg-248–Gly-277 are periplasmic. Residues Gly-278–Leu-298 traverse the membrane as a helical segment. At Thr-299–Thr-316 the chain is on the cytoplasmic side. The helical transmembrane segment at Leu-317–Ile-337 threads the bilayer. Residue Gln-338 is a topological domain, periplasmic. The chain crosses the membrane as a helical span at residues Ile-339–Phe-359. At Thr-360–Arg-369 the chain is on the cytoplasmic side. A helical transmembrane segment spans residues Val-370 to Ser-390. Over Ala-391–Pro-404 the chain is Periplasmic. A helical transmembrane segment spans residues Leu-405–Ile-425. Residues Trp-426 to His-439 are Cytoplasmic-facing.

Belongs to the branched chain amino acid transporter family.

The protein resides in the cell inner membrane. Functionally, liv-II branched chain amino acid transport system, which transports leucine, valine and isoleucine. In Escherichia coli O157:H7, this protein is Branched-chain amino acid permease BrnQ (brnQ).